We begin with the raw amino-acid sequence, 131 residues long: NADPH-dependent 7-cyano-7-deazaguanine reductase (131 aa).

Cysteine 48 (thioimide intermediate) is an active-site residue. The active-site Proton donor is the aspartate 55. Substrate-binding positions include 70-72 (VEL) and 89-90 (QE).

The protein belongs to the GTP cyclohydrolase I family. QueF type 1 subfamily.

The protein localises to the cytoplasm. The catalysed reaction is 7-aminomethyl-7-carbaguanine + 2 NADP(+) = 7-cyano-7-deazaguanine + 2 NADPH + 3 H(+). It functions in the pathway tRNA modification; tRNA-queuosine biosynthesis. Catalyzes the NADPH-dependent reduction of 7-cyano-7-deazaguanine (preQ0) to 7-aminomethyl-7-deazaguanine (preQ1). The polypeptide is NADPH-dependent 7-cyano-7-deazaguanine reductase (Caldicellulosiruptor bescii (strain ATCC BAA-1888 / DSM 6725 / KCTC 15123 / Z-1320) (Anaerocellum thermophilum)).